A 540-amino-acid chain; its full sequence is Phenylalanine--tRNA ligase beta subunit (540 aa).

The 77-residue stretch at 266–342 (LRPEKRTVSV…IAYGYDKIET (77 aa)) folds into the B5 domain. Residues Asp320, Asp326, Glu329, and Asp330 each coordinate Mg(2+).

This sequence belongs to the phenylalanyl-tRNA synthetase beta subunit family. Type 2 subfamily. As to quaternary structure, tetramer of two alpha and two beta subunits. Mg(2+) is required as a cofactor.

The protein resides in the cytoplasm. The enzyme catalyses tRNA(Phe) + L-phenylalanine + ATP = L-phenylalanyl-tRNA(Phe) + AMP + diphosphate + H(+). This is Phenylalanine--tRNA ligase beta subunit from Methanocorpusculum labreanum (strain ATCC 43576 / DSM 4855 / Z).